Here is a 296-residue protein sequence, read N- to C-terminus: Protoheme IX farnesyltransferase (296 aa).

Transmembrane regions (helical) follow at residues 9–29, 36–56, 84–104, 108–128, 133–153, 163–183, 209–229, 234–254, and 265–285; these read VTKP…FLLA, YPLF…GCVF, AVSL…LWFG, LACW…SLYM, VYGT…GYCA, LILL…IAIF, ITLY…GGYA, LVVA…GYKV, and FGFS…DFMV.

This sequence belongs to the UbiA prenyltransferase family. Protoheme IX farnesyltransferase subfamily.

Its subcellular location is the cell inner membrane. The catalysed reaction is heme b + (2E,6E)-farnesyl diphosphate + H2O = Fe(II)-heme o + diphosphate. It functions in the pathway porphyrin-containing compound metabolism; heme O biosynthesis; heme O from protoheme: step 1/1. In terms of biological role, converts heme B (protoheme IX) to heme O by substitution of the vinyl group on carbon 2 of heme B porphyrin ring with a hydroxyethyl farnesyl side group. In Citrobacter koseri (strain ATCC BAA-895 / CDC 4225-83 / SGSC4696), this protein is Protoheme IX farnesyltransferase.